Here is a 167-residue protein sequence, read N- to C-terminus: SsrA-binding protein (167 aa).

A disordered region spans residues 139–167 (QAHDKRHAEKEREWQRDKQRIMRAHNRNA). Residues 144-158 (RHAEKEREWQRDKQR) are compositionally biased toward basic and acidic residues.

Belongs to the SmpB family.

It is found in the cytoplasm. Functionally, required for rescue of stalled ribosomes mediated by trans-translation. Binds to transfer-messenger RNA (tmRNA), required for stable association of tmRNA with ribosomes. tmRNA and SmpB together mimic tRNA shape, replacing the anticodon stem-loop with SmpB. tmRNA is encoded by the ssrA gene; the 2 termini fold to resemble tRNA(Ala) and it encodes a 'tag peptide', a short internal open reading frame. During trans-translation Ala-aminoacylated tmRNA acts like a tRNA, entering the A-site of stalled ribosomes, displacing the stalled mRNA. The ribosome then switches to translate the ORF on the tmRNA; the nascent peptide is terminated with the 'tag peptide' encoded by the tmRNA and targeted for degradation. The ribosome is freed to recommence translation, which seems to be the essential function of trans-translation. The protein is SsrA-binding protein of Xylella fastidiosa (strain 9a5c).